The primary structure comprises 285 residues: Foldase protein PrsA 2 (285 aa).

The N-terminal stretch at 1 to 20 (MRGKHIFIITALISILMLAA) is a signal peptide. C21 carries the N-palmitoyl cysteine lipid modification. C21 carries S-diacylglycerol cysteine lipidation. The 91-residue stretch at 134-224 (KPEIKASHIL…NGYHIIKLTG (91 aa)) folds into the PpiC domain.

The protein belongs to the PrsA family.

Its subcellular location is the cell membrane. It catalyses the reaction [protein]-peptidylproline (omega=180) = [protein]-peptidylproline (omega=0). Functionally, plays a major role in protein secretion by helping the post-translocational extracellular folding of several secreted proteins. Important for the secretion of the protective antigen. The three PsrA proteins in this organism show different but overlapping substrate specificities. The chain is Foldase protein PrsA 2 (prsA2) from Bacillus anthracis.